The primary structure comprises 77 residues: Acyl carrier protein homolog (77 aa).

Positions 1-76 (MSINIKDLIM…DLINAFEDVL (76 aa)) constitute a Carrier domain. Residue Ser-36 is modified to O-(pantetheine 4'-phosphoryl)serine.

Post-translationally, 4'-phosphopantetheine is transferred from CoA to a specific serine of the apo-ACP-like protein.

It functions in the pathway lipid metabolism; fatty acid biosynthesis. Functionally, carrier of the growing fatty acid chain in fatty acid biosynthesis. The sequence is that of Acyl carrier protein homolog from Ureaplasma parvum serovar 3 (strain ATCC 700970).